Consider the following 398-residue polypeptide: MSKTIAINAGSSSLKWQLYQMPEEEVLAQGIIERIGLKDSISTVKYDGKKEEQILDIHDHTEAVKILLNDLIHFGIIAAYDEITGVGHRVVAGGELFKESVVVNDKVLEHIEELSVLAPLHNPGAAAGIRAFRDILPDITSVCVFDTSFHTSMAKHTYLYPIPQKYYTDYKVRKYGAHGTSHKYVAQEAAKMLGRPLEELKLITAHIGNGVSITANYHGKSVDTSMGFTPLAGPMMGTRSGDIDPAIIPYLIEQDPELKDAADVVNMLNKKSGLSGVSGISSDMRDIEAGLQEDNPDAVLAYNIFIDRIKKCIGQYFAVLNGADALVFTAGMGENAPLMRQDVIGGLTWFGMDIDPEKNVFGYRGDISTPESKVKVLVISTDEELCIARDVERLKNTK.

Position 8 (N8) interacts with Mg(2+). Position 15 (K15) interacts with ATP. Residue R89 coordinates substrate. The active-site Proton donor/acceptor is the D146. Residues 206–210 (HIGNG), 283–285 (DMR), and 331–335 (GMGEN) contribute to the ATP site. E383 serves as a coordination point for Mg(2+).

This sequence belongs to the acetokinase family. As to quaternary structure, homodimer. Mg(2+) is required as a cofactor. Requires Mn(2+) as cofactor.

The protein localises to the cytoplasm. It carries out the reaction acetate + ATP = acetyl phosphate + ADP. It functions in the pathway metabolic intermediate biosynthesis; acetyl-CoA biosynthesis; acetyl-CoA from acetate: step 1/2. Its function is as follows. Catalyzes the formation of acetyl phosphate from acetate and ATP. Can also catalyze the reverse reaction. This chain is Acetate kinase, found in Streptococcus pyogenes serotype M6 (strain ATCC BAA-946 / MGAS10394).